Here is a 979-residue protein sequence, read N- to C-terminus: Putative transcription initiation factor TFIID 111 kDa subunit (979 aa).

A Phosphoserine modification is found at serine 244.

As to quaternary structure, TFIID is composed of TATA binding protein (TBP) and a number of TBP-associated factors (TAFs).

Its subcellular location is the nucleus. TAFs are components of the transcription factor IID (TFIID) complex that are essential for mediating regulation of RNA polymerase transcription. The polypeptide is Putative transcription initiation factor TFIID 111 kDa subunit (Schizosaccharomyces pombe (strain 972 / ATCC 24843) (Fission yeast)).